Reading from the N-terminus, the 917-residue chain is Catenin alpha (917 aa).

Phosphothreonine is present on residues threonine 643 and threonine 645. Serine 659 and serine 662 each carry phosphoserine. The span at 878–890 shows a compositional bias: basic and acidic residues; the sequence is PLVRPEKPEEVRA. A disordered region spans residues 878–905; sequence PLVRPEKPEEVRAKVRKGSQKKVQNPIH.

The protein belongs to the vinculin/alpha-catenin family. Interacts with arm/armadillo protein. Post-translationally, rapidly phosphorylated by CK2 and more slowly by CK1.

The protein localises to the cytoplasm. It localises to the cytoskeleton. It is found in the cell junction. Its subcellular location is the adherens junction. The protein resides in the cell membrane. Associates with the cytoplasmic domain of a variety of cadherins. The association of catenins to cadherins produces a complex which is linked to the actin filament network, and which seems to be of primary importance for cadherins cell-adhesion properties. The chain is Catenin alpha from Drosophila melanogaster (Fruit fly).